Consider the following 117-residue polypeptide: UPF0102 protein Rsph17029_0461 (117 aa).

Belongs to the UPF0102 family.

This is UPF0102 protein Rsph17029_0461 from Cereibacter sphaeroides (strain ATCC 17029 / ATH 2.4.9) (Rhodobacter sphaeroides).